The chain runs to 319 residues: MASSAAGCVVIVGSGVIGRSWAMLFASGGFQVKLYDIEQQQIRNALENIRKEMKLLEQAGSLKGSLSVEEQLSLISGCPNIQEAVEGAMHIQECVPEDLELKKKIFAQLDSIIDDRVILSSSTSCLMPSKLFAGLVHVKQCIVAHPVNPPYYIPLVELVPHPETAPTTVDRTHALMKKIGQCPMRVQKEVAGFVLNRLQYAIISEAWRLVEEGIVSPSDLDLVMSEGLGMRYAFIGPLETMHLNAEGMLSYCDRYSEGIKHVLQTFGPIPEFSRATAEKVNQDMCMKVPDDPEHLAARRQWRDECLMRLAKLKSQVQPQ.

Ala-2 carries the N-acetylalanine modification. The residue at position 3 (Ser-3) is a Phosphoserine. NAD(+)-binding positions include 16-17 (VI), Asp-36, Glu-97, and Lys-102. The residue at position 111 (Ser-111) is a Phosphoserine.

It belongs to the 3-hydroxyacyl-CoA dehydrogenase family. In terms of assembly, homodimer. As to expression, widely expressed, with highest levels in liver and kidney.

The protein localises to the cytoplasm. The enzyme catalyses L-gulonate + NAD(+) = 3-dehydro-L-gulonate + NADH + H(+). With respect to regulation, inhibited by malonate. Its function is as follows. Has high L-gulonate 3-dehydrogenase activity. It also exhibits low dehydrogenase activity toward L-3-hydroxybutyrate (HBA) and L-threonate. The protein is Lambda-crystallin homolog (CRYL1) of Homo sapiens (Human).